The following is a 107-amino-acid chain: L-rhamnose mutarotase (107 aa).

Tyrosine 18 provides a ligand contact to substrate. Catalysis depends on histidine 22, which acts as the Proton donor. Residues tyrosine 41 and 76–77 (WW) contribute to the substrate site.

This sequence belongs to the rhamnose mutarotase family. Homodimer.

It localises to the cytoplasm. It catalyses the reaction alpha-L-rhamnose = beta-L-rhamnose. Its pathway is carbohydrate metabolism; L-rhamnose metabolism. Functionally, involved in the anomeric conversion of L-rhamnose. This Paraburkholderia xenovorans (strain LB400) protein is L-rhamnose mutarotase.